The primary structure comprises 235 residues: Large ribosomal subunit protein uL3 (235 aa).

It belongs to the universal ribosomal protein uL3 family. As to quaternary structure, part of the 50S ribosomal subunit. Forms a cluster with proteins L14 and L19.

Its function is as follows. One of the primary rRNA binding proteins, it binds directly near the 3'-end of the 23S rRNA, where it nucleates assembly of the 50S subunit. This is Large ribosomal subunit protein uL3 from Frankia casuarinae (strain DSM 45818 / CECT 9043 / HFP020203 / CcI3).